The sequence spans 310 residues: Coproporphyrin III ferrochelatase (310 aa).

Fe-coproporphyrin III-binding positions include Tyr13, Arg30, 46–47 (RY), Ser54, and Tyr125. 2 residues coordinate Fe(2+): His183 and Glu264.

Belongs to the ferrochelatase family.

The protein localises to the cytoplasm. The enzyme catalyses Fe-coproporphyrin III + 2 H(+) = coproporphyrin III + Fe(2+). The protein operates within porphyrin-containing compound metabolism; protoheme biosynthesis. In terms of biological role, involved in coproporphyrin-dependent heme b biosynthesis. Catalyzes the insertion of ferrous iron into coproporphyrin III to form Fe-coproporphyrin III. This is Coproporphyrin III ferrochelatase from Geobacillus sp. (strain WCH70).